Consider the following 212-residue polypeptide: Small ribosomal subunit protein eS1 (212 aa).

The protein belongs to the eukaryotic ribosomal protein eS1 family.

This is Small ribosomal subunit protein eS1 from Staphylothermus marinus (strain ATCC 43588 / DSM 3639 / JCM 9404 / F1).